Consider the following 154-residue polypeptide: Transcription antitermination protein NusB (154 aa).

This sequence belongs to the NusB family.

Its function is as follows. Involved in transcription antitermination. Required for transcription of ribosomal RNA (rRNA) genes. Binds specifically to the boxA antiterminator sequence of the ribosomal RNA (rrn) operons. This Oleidesulfovibrio alaskensis (strain ATCC BAA-1058 / DSM 17464 / G20) (Desulfovibrio alaskensis) protein is Transcription antitermination protein NusB.